The primary structure comprises 251 residues: Probable transcriptional regulatory protein MSMEG_2940/MSMEI_2866 (251 aa).

Belongs to the TACO1 family.

Its subcellular location is the cytoplasm. In Mycolicibacterium smegmatis (strain ATCC 700084 / mc(2)155) (Mycobacterium smegmatis), this protein is Probable transcriptional regulatory protein MSMEG_2940/MSMEI_2866.